Consider the following 766-residue polypeptide: Phosphoribosylformylglycinamidine synthase subunit PurL (766 aa).

Residue H66 is part of the active site. The ATP site is built by Y69 and K113. E115 provides a ligand contact to Mg(2+). Substrate contacts are provided by residues 116-119 (SHNH) and R138. The Proton acceptor role is filled by H117. A Mg(2+)-binding site is contributed by D139. Q264 provides a ligand contact to substrate. D292 lines the Mg(2+) pocket. Substrate is bound at residue 336–338 (ESQ). Residues N524 and G561 each coordinate ATP. N562 contacts Mg(2+). S564 contacts substrate.

Belongs to the FGAMS family. In terms of assembly, monomer. Part of the FGAM synthase complex composed of 1 PurL, 1 PurQ and 2 PurS subunits.

The protein resides in the cytoplasm. It carries out the reaction N(2)-formyl-N(1)-(5-phospho-beta-D-ribosyl)glycinamide + L-glutamine + ATP + H2O = 2-formamido-N(1)-(5-O-phospho-beta-D-ribosyl)acetamidine + L-glutamate + ADP + phosphate + H(+). It participates in purine metabolism; IMP biosynthesis via de novo pathway; 5-amino-1-(5-phospho-D-ribosyl)imidazole from N(2)-formyl-N(1)-(5-phospho-D-ribosyl)glycinamide: step 1/2. In terms of biological role, part of the phosphoribosylformylglycinamidine synthase complex involved in the purines biosynthetic pathway. Catalyzes the ATP-dependent conversion of formylglycinamide ribonucleotide (FGAR) and glutamine to yield formylglycinamidine ribonucleotide (FGAM) and glutamate. The FGAM synthase complex is composed of three subunits. PurQ produces an ammonia molecule by converting glutamine to glutamate. PurL transfers the ammonia molecule to FGAR to form FGAM in an ATP-dependent manner. PurS interacts with PurQ and PurL and is thought to assist in the transfer of the ammonia molecule from PurQ to PurL. The chain is Phosphoribosylformylglycinamidine synthase subunit PurL from Mycobacterium tuberculosis (strain CDC 1551 / Oshkosh).